A 564-amino-acid chain; its full sequence is Carbamoyl phosphate synthase large chain, N-terminal section (564 aa).

A carboxyphosphate synthetic domain region spans residues 1-399 (MPETPNKVLI…ALQKAIRSLE (399 aa)). Positions 127, 167, 173, 174, 206, 208, 213, 239, 240, 241, 282, and 296 each coordinate ATP. One can recognise an ATP-grasp domain in the interval 131-325 (RAFMKKIGEP…IARIAAKIAI (195 aa)). Mg(2+) is bound by residues Gln282, Glu296, and Asn298. Mn(2+)-binding residues include Gln282, Glu296, and Asn298. An oligomerization domain region spans residues 400-560 (IGEPGLGPSP…YSTYEEECEA (161 aa)).

Belongs to the CarB family. As to quaternary structure, composed of two chains; the small (or glutamine) chain promotes the hydrolysis of glutamine to ammonia, which is used by the large (or ammonia) chain to synthesize carbamoyl phosphate. Tetramer of heterodimers (alpha,beta)4. Requires Mg(2+) as cofactor. It depends on Mn(2+) as a cofactor.

The catalysed reaction is hydrogencarbonate + L-glutamine + 2 ATP + H2O = carbamoyl phosphate + L-glutamate + 2 ADP + phosphate + 2 H(+). It catalyses the reaction hydrogencarbonate + NH4(+) + 2 ATP = carbamoyl phosphate + 2 ADP + phosphate + 2 H(+). Its pathway is amino-acid biosynthesis; L-arginine biosynthesis; carbamoyl phosphate from bicarbonate: step 1/1. The protein operates within pyrimidine metabolism; UMP biosynthesis via de novo pathway; (S)-dihydroorotate from bicarbonate: step 1/3. Large subunit of the glutamine-dependent carbamoyl phosphate synthetase (CPSase). CPSase catalyzes the formation of carbamoyl phosphate from the ammonia moiety of glutamine, carbonate, and phosphate donated by ATP, constituting the first step of 2 biosynthetic pathways, one leading to arginine and/or urea and the other to pyrimidine nucleotides. The large subunit (synthetase) binds the substrates ammonia (free or transferred from glutamine from the small subunit), hydrogencarbonate and ATP and carries out an ATP-coupled ligase reaction, activating hydrogencarbonate by forming carboxy phosphate which reacts with ammonia to form carbamoyl phosphate. The protein is Carbamoyl phosphate synthase large chain, N-terminal section (carB1) of Methanopyrus kandleri (strain AV19 / DSM 6324 / JCM 9639 / NBRC 100938).